The sequence spans 67 residues: Large ribosomal subunit protein uL29 (67 aa).

This sequence belongs to the universal ribosomal protein uL29 family.

The protein is Large ribosomal subunit protein uL29 of Desulfitobacterium hafniense (strain DSM 10664 / DCB-2).